Reading from the N-terminus, the 273-residue chain is MDPGPGANGMPLAGLAWSSASAPPPRGFSAISCTVEGTPASFGKTFAQKSGYFLCLNPLGSLENPQENVVVDIQILVDKSPLPPGFSPVCDPLDSKASVSKKKRMCVKLVPLGAADTAVFDIRLSGKTKTVPGYLRVGDMGGFAIWCRKAKAPRPVPKPRALSRDVRDLSLDSPGQPSKGGFPERTLSRLGSRASTLRRNDSIYEASNLYGISAMDGVPFTLHPRFEGKSCGPLAFSAFADLTIKSLADIEAEYNYGFVVEKTAAARLPPSVS.

The MABP domain maps to 9-151; it reads GMPLAGLAWS…GFAIWCRKAK (143 aa). T130 carries the post-translational modification Phosphothreonine. Residues 154-186 are disordered; that stretch reads RPVPKPRALSRDVRDLSLDSPGQPSKGGFPERT. The short motif at 155–160 is the SH3-binding element; that stretch reads PVPKPR. 4 positions are modified to phosphoserine: S163, S170, S195, and S202. The interaction with TSG101, VPS37B and VPS28 stretch occupies residues 192 to 273; sequence SRASTLRRND…AAARLPPSVS (82 aa). Y204 bears the Phosphotyrosine mark. S207 is modified (phosphoserine). The UMA domain occupies 215–265; sequence MDGVPFTLHPRFEGKSCGPLAFSAFADLTIKSLADIEAEYNYGFVVEKTAA.

The protein belongs to the MVB12 family. Component of the ESCRT-I complex (endosomal sorting complex required for transport I) which consists of TSG101, VPS28, a VPS37 protein (VPS37A to -D) and MVB12A or MVB12B in a 1:1:1:1 stoichiometry. Interacts with CD2AP and CIN85/SH3KBP1. Interacts with CD2AP (via one of the SH3 domains). Interacts with TSG101; the association appears to be mediated by the TSG101-VPS37 binary subcomplex. Interacts with VPS28. Interacts with VPS37B; the association appears to be mediated by the TSG101-VPS37 binary subcomplex. Interacts with VPS37C; the association appears to be mediated by the TSG101-VPS37 binary subcomplex. Interacts with VPS37D; the association appears to be mediated by the TSG101-VPS37 binary subcomplex. Interacts with CEP55. Post-translationally, phosphorylated on Tyr-204 upon EGF stimulation. Phosphorylation is required for interaction with CD2AP and CIN85/SH3KBP1.

It is found in the cytoplasm. The protein localises to the cytoskeleton. Its subcellular location is the nucleus. The protein resides in the endosome. It localises to the microtubule organizing center. It is found in the centrosome. The protein localises to the late endosome membrane. Its function is as follows. Component of the ESCRT-I complex, a regulator of vesicular trafficking process. Required for the sorting of endocytic ubiquitinated cargos into multivesicular bodies. May be involved in the ligand-mediated internalization and down-regulation of EGF receptor. This Bos taurus (Bovine) protein is Multivesicular body subunit 12A (MVB12A).